The primary structure comprises 410 residues: Putative F-box/kelch-repeat protein At1g15680 (410 aa).

In terms of domain architecture, F-box spans 13–58 (CKRRIELPEELLAEIVARLPFISITRFKSVCKGWRSLIESTYFRHL). Kelch repeat units follow at residues 177-227 (VVCM…SLKK) and 274-327 (AYTT…YFPV).

In Arabidopsis thaliana (Mouse-ear cress), this protein is Putative F-box/kelch-repeat protein At1g15680.